The primary structure comprises 141 residues: MAKKVANIVKLQIPAGKATPAPPVGPALGQAGINIMGFTKDFNARTADQAGLLIPVVITVYEDRSFDFVTKTPPAAVLLKKAAGVQKGSGEPNTKKVATVTKAQVQEIAETKMQDLNAADVEAAMRMVEGTARSMGFTVEG.

It belongs to the universal ribosomal protein uL11 family. As to quaternary structure, part of the ribosomal stalk of the 50S ribosomal subunit. Interacts with L10 and the large rRNA to form the base of the stalk. L10 forms an elongated spine to which L12 dimers bind in a sequential fashion forming a multimeric L10(L12)X complex. Post-translationally, one or more lysine residues are methylated.

Forms part of the ribosomal stalk which helps the ribosome interact with GTP-bound translation factors. This Latilactobacillus sakei subsp. sakei (strain 23K) (Lactobacillus sakei subsp. sakei) protein is Large ribosomal subunit protein uL11.